Reading from the N-terminus, the 194-residue chain is 21 kDa hemolysin (194 aa).

Positions 1–19 (MRTRSRSTVRPLWPPPSPA) are cleaved as a signal peptide. BON domains are found at residues 49–118 (DDEV…RTGE) and 127–194 (IDSW…NYVQ).

It is found in the periplasm. This is 21 kDa hemolysin (hly) from Actinobacillus pleuropneumoniae (Haemophilus pleuropneumoniae).